The chain runs to 739 residues: Poly(A) polymerase alpha (739 aa).

Positions 1–17 are enriched in low complexity; that stretch reads MPFPVTTQGSQQTQPPQ. The tract at residues 1–22 is disordered; the sequence is MPFPVTTQGSQQTQPPQRHYGI. Phosphoserine is present on residues serine 10 and serine 24. ATP contacts are provided by residues 100 to 102, threonine 109, 113 to 115, aspartate 167, lysine 228, tyrosine 237, and 246 to 247; these read FGS, DID, and GV. Mg(2+) contacts are provided by aspartate 113, aspartate 115, and aspartate 167. Residues lysine 444, lysine 445, lysine 506, and lysine 507 each participate in a glycyl lysine isopeptide (Lys-Gly) (interchain with G-Cter in SUMO) cross-link. Positions 490 to 507 match the Nuclear localization signal 1 motif; it reads RKQLHQLLPSHVLQKRKK. Residues 508–643 form a ser/Thr-rich region; sequence HSTEGVKLTA…TKVPNPIVGV (136 aa). Positions 523–534 are enriched in low complexity; sequence LDLSMDSDNSMS. The interval 523–725 is disordered; the sequence is LDLSMDSDNS…SDIPALPANP (203 aa). Residues 535 to 557 are compositionally biased toward polar residues; sequence VPSPTSAMKTSPLNSSGSSQGRN. A Phosphoserine; by MAPK modification is found at serine 537. Phosphoserine is present on serine 558. Polar residues predominate over residues 566–582; that stretch reads ASVTSIQASEVSVPQAN. Low complexity-rich tracts occupy residues 583–594 and 611–622; these read SSESPGGPSSES and TVSRVVSSTRLV. N6-acetyllysine occurs at positions 635 and 644. Positions 644-659 match the Nuclear localization signal 2 motif; that stretch reads KRTSSPNKEESPKKTK. 2 stretches are compositionally biased toward basic and acidic residues: residues 650 to 660 and 676 to 686; these read NKEESPKKTKT and GHDKTETKEQV. Residues 671–739 are required for interaction with NUDT21; sequence CLALSGHDKT…KNSIKLRLNR (69 aa). Residues 691 to 715 are compositionally biased toward polar residues; it reads SAVQSETVPASASLLASQKTSSTDL. Lysine 730 is subject to N6-acetyllysine; alternate. A Glycyl lysine isopeptide (Lys-Gly) (interchain with G-Cter in SUMO); alternate cross-link involves residue lysine 730. The residue at position 732 (serine 732) is a Phosphoserine. Lysine 734 is subject to N6-acetyllysine; alternate. A Glycyl lysine isopeptide (Lys-Gly) (interchain with G-Cter in SUMO); alternate cross-link involves residue lysine 734.

Belongs to the poly(A) polymerase family. In terms of assembly, monomer. Found in a complex with CPSF1, FIP1L1 and PAPOLA. Interacts with AHCYL1 and FIP1L1; the interaction with AHCYL1 seems to increase interaction with FIP1L1. Interacts with NUDT21; the interaction is diminished by acetylation. Interacts with KPNB1; the interaction promotes PAP nuclear import and is inhibited by acetylation of PAP. Mg(2+) is required as a cofactor. It depends on Mn(2+) as a cofactor. Polysumoylated. Varying sumoylation depending on tissue- and cell-type. Highly sumoylated in bladder and NIH 3T3 cells. Sumoylation is required for nuclear localization and enhances PAP stability. Desumoylated by SENP1. Inhibits polymerase activity. In terms of processing, hyperphosphorylation on multiple CDK2 consensus and non-consensus sites in the C-terminal Ser/Thr-rich region represses PAP activity in late M-phase. Phosphorylation/dephosphorylation may regulate the interaction between PAP and CPSF. Post-translationally, acetylated in the C-terminus. Acetylation decreases interaction with NUDT21 and KPNB1, and inhibits nuclear localization through inhibiting binding to the importin alpha/beta complex. In terms of tissue distribution, expressed in brain, thymus, lung, kidney, bladder, testis and spleen.

It localises to the nucleus. The enzyme catalyses RNA(n) + ATP = RNA(n)-3'-adenine ribonucleotide + diphosphate. Polymerase that creates the 3'-poly(A) tail of mRNA's. Also required for the endoribonucleolytic cleavage reaction at some polyadenylation sites. May acquire specificity through interaction with a cleavage and polyadenylation specificity factor (CPSF) at its C-terminus. The protein is Poly(A) polymerase alpha (Papola) of Mus musculus (Mouse).